A 198-amino-acid chain; its full sequence is MSYYAFEGLIPVVHPDAFVHPSAVLIGDVIVGAGVYIGPLASLRGDYGRLILEAGSNLQDGCIMHGYCDTDTIVHENGHIGHGAILHGCVVGRDALVGMNSVIMDGAVIGEESIVAAMSFVKAGFQGEARQLLVGSPARVLRQVTDQELHWKRLNTKEYQDLAIRCRTGLSETKPLTQVEENRPRLKGTTDVKPKSAQ.

Positions 179 to 198 are disordered; it reads VEENRPRLKGTTDVKPKSAQ. Basic and acidic residues predominate over residues 180-198; the sequence is EENRPRLKGTTDVKPKSAQ.

This sequence belongs to the transferase hexapeptide repeat family.

The protein operates within amine and polyamine metabolism; carnitine metabolism. Functionally, overproduction of CaiE stimulates the activity of CaiB and CaiD. The polypeptide is Carnitine operon protein CaiE (Salmonella enteritidis PT4 (strain P125109)).